The primary structure comprises 260 residues: MTKTLTKHLQAIKAEGKGLFIPYIMAGDHDKGLDGLFDTISFLEAQGVSAIEIGIPWSDPVADGPVIELAGQRSLVKGTSLASIIARLQEKKTQVPLVIMTYFNPVFQYGVETFVADLQNTSVKGLIIPDLPHEQESFIKPYLENLDLALVPLVSLTTGLERQKELIEDARGFVYAVAINGVTGKTGNYRDDLDKHLKHLTEIAQIPVLTGFGVSTLADIKRFNQVSDGVIVGSKIVKGLHEGMQEEIKDFIYAGSHYQK.

Residues glutamate 52 and aspartate 63 each act as proton acceptor in the active site.

This sequence belongs to the TrpA family. As to quaternary structure, tetramer of two alpha and two beta chains.

The catalysed reaction is (1S,2R)-1-C-(indol-3-yl)glycerol 3-phosphate + L-serine = D-glyceraldehyde 3-phosphate + L-tryptophan + H2O. It participates in amino-acid biosynthesis; L-tryptophan biosynthesis; L-tryptophan from chorismate: step 5/5. Its function is as follows. The alpha subunit is responsible for the aldol cleavage of indoleglycerol phosphate to indole and glyceraldehyde 3-phosphate. This is Tryptophan synthase alpha chain from Streptococcus mutans serotype c (strain ATCC 700610 / UA159).